We begin with the raw amino-acid sequence, 452 residues long: Chromosomal replication initiator protein DnaA (452 aa).

The interval 1 to 84 (MTENEQIFWN…SIEYVFEETQ (84 aa)) is domain I, interacts with DnaA modulators. The domain II stretch occupies residues 84–110 (QSTSNSPQISQNKTAELATETLPFVQN). The segment at 111–329 (DLNPKYSFDN…GALKDISLVA (219 aa)) is domain III, AAA+ region. Residues G155, G157, K158, and T159 each coordinate ATP. Residues 330 to 452 (NFKKLDVITV…EMETIKNKIK (123 aa)) are domain IV, binds dsDNA.

This sequence belongs to the DnaA family. In terms of assembly, oligomerizes as a right-handed, spiral filament on DNA at oriC.

Its subcellular location is the cytoplasm. Its function is as follows. Plays an essential role in the initiation and regulation of chromosomal replication. ATP-DnaA binds to the origin of replication (oriC) to initiate formation of the DNA replication initiation complex once per cell cycle. Binds the DnaA box (a 9 base pair repeat at the origin) and separates the double-stranded (ds)DNA. Forms a right-handed helical filament on oriC DNA; dsDNA binds to the exterior of the filament while single-stranded (ss)DNA is stabiized in the filament's interior. The ATP-DnaA-oriC complex binds and stabilizes one strand of the AT-rich DNA unwinding element (DUE), permitting loading of DNA polymerase. After initiation quickly degrades to an ADP-DnaA complex that is not apt for DNA replication. Binds acidic phospholipids. In Streptococcus mutans serotype c (strain ATCC 700610 / UA159), this protein is Chromosomal replication initiator protein DnaA.